The chain runs to 113 residues: Large ribosomal subunit protein bL19 (113 aa).

This sequence belongs to the bacterial ribosomal protein bL19 family.

In terms of biological role, this protein is located at the 30S-50S ribosomal subunit interface and may play a role in the structure and function of the aminoacyl-tRNA binding site. The sequence is that of Large ribosomal subunit protein bL19 from Corynebacterium efficiens (strain DSM 44549 / YS-314 / AJ 12310 / JCM 11189 / NBRC 100395).